The following is a 287-amino-acid chain: MDLLLALLPALFWGSIVLFNVKLGGGPYSQTLGTTIGALIVSIVIYFFVQPVLSLRIFIVGIVSGLFWSLGQANQLKSIQLMGVSKTMPISTGMQLVSTSLFGVIVFREWSTPIAITLGVLALIFIIVGIILTSLEDKNDKKEGEPSNLKKGILILLVSTLGYLVYVVVARLFNVSGWSALLPQAIGMVVGGLVLTYRHKPFNKYAIRNILPGLIWAGGNMFLFISQPRVGVATSFSLSQMGIVISTLGGIFILREKKTKRQLIAIAIGIILIIAAAVFLGIAKTNS.

8 helical membrane passes run 4–26 (LLAL…LGGG), 38–60 (ALIV…IFIV), 110–132 (WSTP…GIIL), 153–175 (ILIL…LFNV), 180–197 (ALLP…VLTY), 210–227 (ILPG…FISQ), 232–254 (VATS…IFIL), and 261–283 (RQLI…LGIA).

This sequence belongs to the GRP transporter (TC 2.A.7.5) family.

Its subcellular location is the cell membrane. Involved in the uptake of glucose. The chain is Glucose uptake protein GlcU (glcU) from Bacillus subtilis (strain 168).